We begin with the raw amino-acid sequence, 401 residues long: Dual-specificity RNA methyltransferase RlmN (401 aa).

The Proton acceptor role is filled by Glu114. Positions 120–365 constitute a Radical SAM core domain; it reads DKGRGTLCVS…TIVRRTRGDD (246 aa). A disulfide bond links Cys127 and Cys370. Residues Cys134, Cys138, and Cys141 each coordinate [4Fe-4S] cluster. S-adenosyl-L-methionine contacts are provided by residues 187–188, Ser219, 241–243, and Asn327; these read GE and SLH. Residue Cys370 is the S-methylcysteine intermediate of the active site.

Belongs to the radical SAM superfamily. RlmN family. [4Fe-4S] cluster is required as a cofactor.

The protein resides in the cytoplasm. The enzyme catalyses adenosine(2503) in 23S rRNA + 2 reduced [2Fe-2S]-[ferredoxin] + 2 S-adenosyl-L-methionine = 2-methyladenosine(2503) in 23S rRNA + 5'-deoxyadenosine + L-methionine + 2 oxidized [2Fe-2S]-[ferredoxin] + S-adenosyl-L-homocysteine. It catalyses the reaction adenosine(37) in tRNA + 2 reduced [2Fe-2S]-[ferredoxin] + 2 S-adenosyl-L-methionine = 2-methyladenosine(37) in tRNA + 5'-deoxyadenosine + L-methionine + 2 oxidized [2Fe-2S]-[ferredoxin] + S-adenosyl-L-homocysteine. Specifically methylates position 2 of adenine 2503 in 23S rRNA and position 2 of adenine 37 in tRNAs. m2A2503 modification seems to play a crucial role in the proofreading step occurring at the peptidyl transferase center and thus would serve to optimize ribosomal fidelity. In Xanthomonas oryzae pv. oryzae (strain MAFF 311018), this protein is Dual-specificity RNA methyltransferase RlmN.